Reading from the N-terminus, the 31-residue chain is U2-theraphotoxin-Hhn1a (31 aa).

3 cysteine pairs are disulfide-bonded: C2–C14, C7–C19, and C13–C26.

As to expression, expressed by the venom gland.

The protein resides in the secreted. Agglutinates erythrocytes. The protein is U2-theraphotoxin-Hhn1a of Cyriopagopus hainanus (Chinese bird spider).